Reading from the N-terminus, the 1119-residue chain is DNA-directed RNA polymerase D subunit 2b (1119 aa).

D732 contributes to the Mg(2+) binding site. Zn(2+) is bound by residues C1055, C1058, C1080, and C1083. The C4-type zinc finger occupies 1055-1083 (CRKCKTYANVIERTPSSGRKIRGPYCRVC).

The protein belongs to the RNA polymerase beta chain family. Component of the RNA polymerase IVa and IVb (Pol IV) complexes.

Its subcellular location is the nucleus. The catalysed reaction is RNA(n) + a ribonucleoside 5'-triphosphate = RNA(n+1) + diphosphate. Functionally, DNA-dependent RNA polymerase catalyzes the transcription of DNA into RNA using the four ribonucleoside triphosphates as substrates. Second largest component of RNA polymerase IVa and IVb which mediate short-interfering RNAs (siRNA) accumulation and subsequent RNA-directed DNA methylation-dependent (RdDM) silencing of endogenous repeated sequences, including transposable largest subunit. Also required for full erasure of methylation elements. Required for intercellular RNA interference (RNAi) leading to systemic post-transcriptional gene silencing. This is DNA-directed RNA polymerase D subunit 2b (NRPD2b) from Arabidopsis thaliana (Mouse-ear cress).